Here is a 55-residue protein sequence, read N- to C-terminus: Male-specific sperm protein Mst84Dc (55 aa).

It belongs to the MST(3)CGP family. In terms of tissue distribution, testis.

The chain is Male-specific sperm protein Mst84Dc (Mst84Dc) from Drosophila melanogaster (Fruit fly).